Here is a 350-residue protein sequence, read N- to C-terminus: GDSL esterase/lipase At2g42990 (350 aa).

The first 24 residues, 1-24 (MATHYLSPSILCIILTTLVSIAGA), serve as a signal peptide directing secretion. Serine 35 serves as the catalytic Nucleophile. N-linked (GlcNAc...) asparagine glycosylation is found at asparagine 98, asparagine 117, and asparagine 141. Catalysis depends on residues aspartate 325 and histidine 328.

It belongs to the 'GDSL' lipolytic enzyme family.

The protein localises to the secreted. This chain is GDSL esterase/lipase At2g42990, found in Arabidopsis thaliana (Mouse-ear cress).